We begin with the raw amino-acid sequence, 349 residues long: NADH-quinone oxidoreductase subunit H (349 aa).

The next 8 helical transmembrane spans lie at 16-36 (WPVV…MGCV), 88-108 (GLFI…WAVV), 123-143 (LLFL…AGWA), 157-177 (AAQM…VLLI), 202-222 (FLSW…ISGI), 264-284 (ILVS…PVGF), 285-305 (LPDG…IFLW), and 325-345 (VFIP…MSPL).

Belongs to the complex I subunit 1 family. NDH-1 is composed of 14 different subunits. Subunits NuoA, H, J, K, L, M, N constitute the membrane sector of the complex.

Its subcellular location is the cell inner membrane. It catalyses the reaction a quinone + NADH + 5 H(+)(in) = a quinol + NAD(+) + 4 H(+)(out). NDH-1 shuttles electrons from NADH, via FMN and iron-sulfur (Fe-S) centers, to quinones in the respiratory chain. The immediate electron acceptor for the enzyme in this species is believed to be ubiquinone. Couples the redox reaction to proton translocation (for every two electrons transferred, four hydrogen ions are translocated across the cytoplasmic membrane), and thus conserves the redox energy in a proton gradient. This subunit may bind ubiquinone. This Azoarcus sp. (strain BH72) protein is NADH-quinone oxidoreductase subunit H.